Here is a 79-residue protein sequence, read N- to C-terminus: uncharacterized protein (79 aa).

A signal peptide spans 1 to 33 (MRLIIRAIVLLALVWIGLLMSGYGILVGSKVNA).

This is an uncharacterized protein from Salmonella typhi.